The following is a 436-amino-acid chain: Capsid protein (436 aa).

The segment at 326-370 (RDYSQRGTVPTAPSRQQVESEARAPYPKTNRPPTTADILPGDLDS) is disordered. Residues 330–344 (QRGTVPTAPSRQQVE) show a composition bias toward polar residues.

It belongs to the anelloviridae capsid protein family.

The protein resides in the virion. Its function is as follows. Self-assembles to form an icosahedral capsid with a T=1 symmetry, about 30 nm in diameter, and consisting of 60 capsid proteins. The capsid encapsulates the genomic DNA. Capsid protein is involved in attachment and entry into the host cell. In Torque teno felis virus (isolate Fc-TTV4), this protein is Capsid protein.